A 108-amino-acid polypeptide reads, in one-letter code: Urease subunit beta (108 aa).

It belongs to the urease beta subunit family. As to quaternary structure, heterotrimer of UreA (gamma), UreB (beta) and UreC (alpha) subunits. Three heterotrimers associate to form the active enzyme.

It localises to the cytoplasm. The enzyme catalyses urea + 2 H2O + H(+) = hydrogencarbonate + 2 NH4(+). It participates in nitrogen metabolism; urea degradation; CO(2) and NH(3) from urea (urease route): step 1/1. The sequence is that of Urease subunit beta from Trichormus variabilis (strain ATCC 29413 / PCC 7937) (Anabaena variabilis).